Consider the following 347-residue polypeptide: UDP-rhamnose/UDP-galactose transporter 1 (347 aa).

10 helical membrane-spanning segments follow: residues 11 to 31, 43 to 63, 80 to 100, 103 to 123, 132 to 152, 159 to 179, 195 to 215, 223 to 243, 256 to 276, and 285 to 305; these read AVSD…IIMA, FGFA…VGMV, LLWF…SLML, VGFY…LEWI, EVKA…VTDV, FICA…IGSL, APIQ…LLSG, MTYG…FCNI, SFQV…WLLF, and IAGM…VDIE.

It belongs to the TPT transporter family. TPT (TC 2.A.7.9) subfamily. As to expression, widely expressed in the whole plant.

The protein localises to the golgi apparatus membrane. Functionally, nucleotide-sugar transporter that transports UDP-rhamnose or UDP-galactose and UMP in a strict counter-exchange mode. In Arabidopsis thaliana (Mouse-ear cress), this protein is UDP-rhamnose/UDP-galactose transporter 1.